Reading from the N-terminus, the 166-residue chain is Large ribosomal subunit protein bL19 (166 aa).

The protein belongs to the bacterial ribosomal protein bL19 family.

In terms of biological role, this protein is located at the 30S-50S ribosomal subunit interface and may play a role in the structure and function of the aminoacyl-tRNA binding site. This Chelativorans sp. (strain BNC1) protein is Large ribosomal subunit protein bL19.